Here is an 81-residue protein sequence, read N- to C-terminus: Conotoxin Eb11.3 (81 aa).

Residues 1 to 23 form the signal peptide; sequence MMFRLTSVWCLLVIVLLNSAVDG. Intrachain disulfides connect C27–C41, C34–C48, C40–C56, and C47–C62. Residue L69 is modified to Leucine amide. Positions 73-81 are excised as a propeptide; the sequence is AQYKRFFRR.

Belongs to the conotoxin I2 superfamily. As to expression, expressed by the venom duct.

The protein localises to the secreted. This Conus eburneus (Ivory cone) protein is Conotoxin Eb11.3.